A 139-amino-acid polypeptide reads, in one-letter code: Probable disulfide formation protein C 2 (139 aa).

A helical membrane pass occupies residues 6–25; that stretch reads KYHIAIAWMIATSAMLISLF. C35 and C38 form a disulfide bridge. Transmembrane regions (helical) follow at residues 40–59 and 66–83; these read YQRM…MYRK and YAFP…YQIT. C95 and C101 form a disulfide bridge. The helical transmembrane segment at 110–133 threads the bilayer; the sequence is GFISIPMLSFIGFLVIIILIYIES.

It belongs to the DsbB family. BdbC subfamily.

The protein localises to the cell membrane. In terms of biological role, required for disulfide bond formation in some proteins. The chain is Probable disulfide formation protein C 2 (bdbC2) from Bacillus cereus (strain ATCC 10987 / NRS 248).